The sequence spans 131 residues: ATP synthase epsilon chain, chloroplastic (131 aa).

Belongs to the ATPase epsilon chain family. F-type ATPases have 2 components, CF(1) - the catalytic core - and CF(0) - the membrane proton channel. CF(1) has five subunits: alpha(3), beta(3), gamma(1), delta(1), epsilon(1). CF(0) has three main subunits: a, b and c.

The protein resides in the plastid. It is found in the chloroplast thylakoid membrane. Functionally, produces ATP from ADP in the presence of a proton gradient across the membrane. The polypeptide is ATP synthase epsilon chain, chloroplastic (Cyanidioschyzon merolae (strain NIES-3377 / 10D) (Unicellular red alga)).